Here is a 604-residue protein sequence, read N- to C-terminus: NADPH oxidase activator (604 aa).

2 TPR repeats span residues 36–69 (SKIN…DKYL) and 71–103 (SSYY…LRGH). 2 disordered regions span residues 180–298 (FKPP…KLPS) and 383–581 (DIIP…PYQV). Low complexity-rich tracts occupy residues 194–215 (SATT…SPPS) and 225–243 (PSSS…SSSP). Residues 244–260 (KLPPTPKPSFGSSPPPS) are compositionally biased toward pro residues. Low complexity predominate over residues 261–284 (SSSSSSSSSSSSSSSISPLTNKTL). The 76-residue stretch at 309 to 384 (KITLKVFYKD…EINEINVKDI (76 aa)) folds into the PB1 domain. 3 stretches are compositionally biased toward low complexity: residues 396 to 424 (PDKT…SSSS), 435 to 453 (PKTT…TTST), and 467 to 483 (FGST…SSSS). Residues 502 to 528 (LLKQQNQTQSINIPPKVPTSSRPKMTQ) are compositionally biased toward polar residues. Residues 529 to 570 (SHSPPSSSPLSSYSTSFQSVSSPSLSSSYNGSTSSYGGFSSS) are compositionally biased toward low complexity. The 32-residue stretch at 573–604 (PPTPYPYQVLYTDSNEKYYLNTETNETFWELP) folds into the WW domain.

In terms of biological role, may function as an activator of NOX1, a superoxide-producing NADPH oxidase. The chain is NADPH oxidase activator (ncfA) from Dictyostelium discoideum (Social amoeba).